Reading from the N-terminus, the 317-residue chain is Ribonuclease 3-like protein 2 (317 aa).

Residues 1 to 26 (MAPPPAMKPASRKRGPPAPDPVELPP) form a disordered region. The segment covering 16–26 (PPAPDPVELPP) has biased composition (pro residues). An RNase III domain is found at 37 to 185 (AARVERLLRY…IAAAVYVDCK (149 aa)). Glu74, Asp171, and Glu174 together coordinate Mg(2+). One can recognise a DRBM domain in the interval 211 to 274 (QPVTMLHELC…ARDATRKLAG (64 aa)).

Requires Mg(2+) as cofactor. It depends on Mn(2+) as a cofactor.

Its function is as follows. Cleaves double-stranded RNA (dsRNA). The chain is Ribonuclease 3-like protein 2 from Oryza sativa subsp. japonica (Rice).